Reading from the N-terminus, the 581-residue chain is Myoneurin (581 aa).

In terms of domain architecture, BTB spans 24–89 (CDCTIVIGEF…IYTGTLNLDS (66 aa)). A disordered region spans residues 167 to 193 (PKQGALAKKSSQTKKKKKAFNSQKTGQ). Short sequence motifs (nuclear localization signal) lie at residues 174–190 (KKSS…NSQK) and 256–261 (KRKRGK). Phosphoserine is present on serine 288. C2H2-type zinc fingers lie at residues 301-323 (PMCN…MRIH), 329-351 (YVCH…VRTH), 357-380 (YKCE…RMHH), 386-408 (YKCD…ARKH), 414-436 (YVCD…VRRH), 442-464 (YVCD…SRKH), and 470-493 (FICE…TKVH).

It belongs to the krueppel C2H2-type zinc-finger protein family.

Its subcellular location is the nucleus. This is Myoneurin (MYNN) from Bos taurus (Bovine).